We begin with the raw amino-acid sequence, 269 residues long: Troponin T, fast skeletal muscle (269 aa).

Positions Met-1–Ala-23 are enriched in acidic residues. The disordered stretch occupies residues Met-1–Lys-72. An N-acetylserine modification is found at Ser-2. The residue at position 2 (Ser-2) is a Phosphoserine. The span at Ala-24–Glu-34 shows a compositional bias: basic and acidic residues. The span at Glu-35 to Glu-47 shows a compositional bias: acidic residues. Positions Pro-60–Lys-72 are enriched in basic and acidic residues. Ser-88 is subject to Phosphoserine. Residues Arg-111–Lys-153 are compositionally biased toward basic and acidic residues. The disordered stretch occupies residues Arg-111 to Leu-158. 3 positions are modified to phosphoserine: Ser-159, Ser-166, and Ser-167. The segment at Arg-245–Lys-269 is disordered.

Belongs to the troponin T family. In fetal and adult fast skeletal muscles, with a higher level expression in fetal than in adult muscle.

In terms of biological role, troponin T is the tropomyosin-binding subunit of troponin, the thin filament regulatory complex which confers calcium-sensitivity to striated muscle actomyosin ATPase activity. The polypeptide is Troponin T, fast skeletal muscle (TNNT3) (Homo sapiens (Human)).